A 393-amino-acid polypeptide reads, in one-letter code: Ornithine decarboxylase 2 (393 aa).

Lys62 is modified (N6-(pyridoxal phosphate)lysine). Pyridoxal 5'-phosphate contacts are provided by residues Ser194, Gly231, and 265 to 268; that span reads EPGR. 314–315 contributes to the substrate binding site; that stretch reads YY. The active-site Proton donor; shared with dimeric partner is the Cys343. Substrate is bound at residue Asp344. Residue Tyr371 participates in pyridoxal 5'-phosphate binding.

This sequence belongs to the Orn/Lys/Arg decarboxylase class-II family. In terms of assembly, homodimer. Only the dimer is catalytically active, as the active sites are constructed of residues from both monomers. It depends on pyridoxal 5'-phosphate as a cofactor.

The enzyme catalyses L-ornithine + H(+) = putrescine + CO2. The protein operates within amine and polyamine biosynthesis; putrescine biosynthesis via L-ornithine pathway; putrescine from L-ornithine: step 1/1. With respect to regulation, inhibited by antizyme (AZ) in response to polyamine levels. AZ inhibits the assembly of the functional homodimer by binding to ODC monomers and targeting them for ubiquitin-independent proteolytic destruction by the 26S proteasome. In terms of biological role, catalyzes the first and rate-limiting step of polyamine biosynthesis that converts ornithine into putrescine, which is the precursor for the polyamines, spermidine and spermine. Polyamines are essential for cell proliferation and are implicated in cellular processes, ranging from DNA replication to apoptosis. The sequence is that of Ornithine decarboxylase 2 (Odc2) from Drosophila melanogaster (Fruit fly).